Consider the following 229-residue polypeptide: Probable ribonuclease H (229 aa).

Residues 42-164 form the RNase H type-1 domain; sequence LQDISLEFDK…ADFLANSAAK (123 aa). A divalent metal cation is bound by residues Glu-60, Asp-87, and Asp-156.

This sequence belongs to the RNase H family. The cofactor is a divalent metal cation.

It carries out the reaction Endonucleolytic cleavage to 5'-phosphomonoester.. Endonuclease that specifically degrades the RNA of RNA-DNA hybrids. The chain is Probable ribonuclease H (RNH1) from Acanthamoeba polyphaga mimivirus (APMV).